The primary structure comprises 369 residues: Phospho-N-acetylmuramoyl-pentapeptide-transferase (369 aa).

10 helical membrane passes run 2–22 (IAIL…TPFF), 54–74 (GLVI…FLGL), 80–100 (GLLV…DDIL), 113–133 (FYKV…TFLV), 158–178 (ALFS…LLWI), 195–215 (LDGL…VIGF), 241–261 (PLDM…FLWW), 268–288 (IMMG…LSIL), 293–313 (LLFL…ILQI), and 347–367 (FWII…ADWL).

Belongs to the glycosyltransferase 4 family. MraY subfamily. The cofactor is Mg(2+).

Its subcellular location is the cell membrane. The enzyme catalyses UDP-N-acetyl-alpha-D-muramoyl-L-alanyl-gamma-D-glutamyl-meso-2,6-diaminopimeloyl-D-alanyl-D-alanine + di-trans,octa-cis-undecaprenyl phosphate = di-trans,octa-cis-undecaprenyl diphospho-N-acetyl-alpha-D-muramoyl-L-alanyl-D-glutamyl-meso-2,6-diaminopimeloyl-D-alanyl-D-alanine + UMP. Its pathway is cell wall biogenesis; peptidoglycan biosynthesis. Functionally, catalyzes the initial step of the lipid cycle reactions in the biosynthesis of the cell wall peptidoglycan: transfers peptidoglycan precursor phospho-MurNAc-pentapeptide from UDP-MurNAc-pentapeptide onto the lipid carrier undecaprenyl phosphate, yielding undecaprenyl-pyrophosphoryl-MurNAc-pentapeptide, known as lipid I. This chain is Phospho-N-acetylmuramoyl-pentapeptide-transferase, found in Tropheryma whipplei (strain Twist) (Whipple's bacillus).